The primary structure comprises 177 residues: Large ribosomal subunit protein uL6 (177 aa).

The protein belongs to the universal ribosomal protein uL6 family. As to quaternary structure, part of the 50S ribosomal subunit.

Its function is as follows. This protein binds to the 23S rRNA, and is important in its secondary structure. It is located near the subunit interface in the base of the L7/L12 stalk, and near the tRNA binding site of the peptidyltransferase center. This is Large ribosomal subunit protein uL6 from Vibrio cholerae serotype O1 (strain ATCC 39315 / El Tor Inaba N16961).